The chain runs to 143 residues: Class II hydrophobin qid3 (143 aa).

Residues 1-17 form the signal peptide; it reads MKFLTVAAVFFTAVLAA. A compositionally biased stretch (pro residues) spans 20–37; sequence NYPPPPPPTYAPPPPTYT. Residues 20–67 form a disordered region; that stretch reads NYPPPPPPTYAPPPPTYTLPPNGNGGGNGNGNGNGNGGGNGNGNGNTN. 10 consecutive repeat copies span residues 41–42, 43–44, 47–48, 49–50, 51–52, 53–54, 55–56, 59–60, 61–62, and 63–64. The tract at residues 41–64 is 10 X 2 AA repeats of N-G; it reads NGNGGGNGNGNGNGNGGGNGNGNG. Gly residues predominate over residues 42 to 63; the sequence is GNGGGNGNGNGNGNGGGNGNGN. 3 disulfides stabilise this stretch: cysteine 74–cysteine 124, cysteine 85–cysteine 97, and cysteine 125–cysteine 136.

Belongs to the cerato-ulmin hydrophobin family. Homotetramer. Further self-assembles to form highly ordered films at water-air interfaces through intermolecular interactions.

It localises to the secreted. The protein localises to the cell wall. Its function is as follows. Aerial growth, conidiation, and dispersal of filamentous fungi in the environment rely upon a capability of their secreting small amphipathic proteins called hydrophobins (HPBs) with low sequence identity. Class I can self-assemble into an outermost layer of rodlet bundles on aerial cell surfaces, conferring cellular hydrophobicity that supports fungal growth, development and dispersal; whereas Class II form highly ordered films at water-air interfaces through intermolecular interactions but contribute nothing to the rodlet structure. Qid3 is a class II hydrophobin that might acts as a chitinase inhibitor at the cell surface that blocks the degradation of the chitin rings localized in the budding region of dividing cells. The protein is Class II hydrophobin qid3 of Trichoderma harzianum (Hypocrea lixii).